Reading from the N-terminus, the 180-residue chain is Large ribosomal subunit protein uL6 (180 aa).

It belongs to the universal ribosomal protein uL6 family. Part of the 50S ribosomal subunit.

Functionally, this protein binds to the 23S rRNA, and is important in its secondary structure. It is located near the subunit interface in the base of the L7/L12 stalk, and near the tRNA binding site of the peptidyltransferase center. This is Large ribosomal subunit protein uL6 from Salinispora tropica (strain ATCC BAA-916 / DSM 44818 / JCM 13857 / NBRC 105044 / CNB-440).